The chain runs to 232 residues: Orotidine 5'-phosphate decarboxylase (232 aa).

Substrate-binding positions include D12, K34, 61-70 (DMKLLDIDNT), T116, R177, Q186, G206, and R207. K63 serves as the catalytic Proton donor.

Belongs to the OMP decarboxylase family. Type 1 subfamily. Homodimer.

The enzyme catalyses orotidine 5'-phosphate + H(+) = UMP + CO2. It functions in the pathway pyrimidine metabolism; UMP biosynthesis via de novo pathway; UMP from orotate: step 2/2. In terms of biological role, catalyzes the decarboxylation of orotidine 5'-monophosphate (OMP) to uridine 5'-monophosphate (UMP). This Sinorhizobium medicae (strain WSM419) (Ensifer medicae) protein is Orotidine 5'-phosphate decarboxylase.